We begin with the raw amino-acid sequence, 487 residues long: MPN domain-containing protein (487 aa).

The tract at residues 1–55 (MAAPESLSPGATAEEAPEEDEDDAEAEDPERGTGSGGRSGSLGGSGGGTAGPGMA) is disordered. At A2 the chain carries N-acetylalanine. S8 carries the post-translational modification Phosphoserine. Acidic residues predominate over residues 15–28 (EAPEEDEDDAEAED). Residues 33-55 (TGSGGRSGSLGGSGGGTAGPGMA) are compositionally biased toward gly residues. An RAMA domain is found at 61 to 156 (TRRAVTLRVL…KYKAAWLRRH (96 aa)). Positions 113, 115, and 135 each coordinate DNA. The disordered stretch occupies residues 163–217 (ATADESPTSEGEEEELLLEEEEEDVLAGVSSEDKGHRPPGKGSLEPEATPPGKRM). S168 and S171 each carry phosphoserine. The segment covering 172–187 (EGEEEELLLEEEEEDV) has biased composition (acidic residues). One can recognise an MPN domain in the interval 258-393 (VAVSSNVLFL…PESKICPFWV (136 aa)). Positions 335, 337, and 348 each coordinate Zn(2+). A JAMM motif motif is present at residues 335 to 348 (HSHPHSPAVPSLQD).

It belongs to the peptidase M67 family. In terms of assembly, monomer. Mainly monomoric, but when binds to dsDNA, forms homotetramer assembled into two homodimers. May interact with histones; this interaction is facilitated by. Degraded following binding to N(6)-methyladenosine methylated DNA (m6A).

Its function is as follows. Probable protease. Acts as a sensor of N(6)-methyladenosine methylation on DNA (m6A): recognizes and binds m6A DNA, leading to its degradation. Binds only double strand DNA (dsDNA) in a sequence-independent manner. The polypeptide is MPN domain-containing protein (Mus musculus (Mouse)).